The primary structure comprises 265 residues: Undecaprenyl-diphosphatase (265 aa).

7 consecutive transmembrane segments (helical) span residues 38–58, 75–95, 108–128, 135–155, 181–201, 215–235, and 244–264; these read RSDF…CLAL, RDYV…GLIV, PVAW…HFAG, VVTW…GVFP, FVFM…LLEM, VAVA…WLLG, and VFAV…PAAA.

Belongs to the UppP family.

Its subcellular location is the cell inner membrane. The catalysed reaction is di-trans,octa-cis-undecaprenyl diphosphate + H2O = di-trans,octa-cis-undecaprenyl phosphate + phosphate + H(+). Its function is as follows. Catalyzes the dephosphorylation of undecaprenyl diphosphate (UPP). Confers resistance to bacitracin. This chain is Undecaprenyl-diphosphatase, found in Xanthomonas axonopodis pv. citri (strain 306).